A 338-amino-acid chain; its full sequence is Transcription factor GRA2 (338 aa).

2 disordered regions span residues 171-230 and 256-277; these read CQDS…PHYA and TQHE…DGGS. Over residues 174 to 203 the composition is skewed to polar residues; it reads SGVSQPSNLADDTLGQGQPVSTVVQPQHPG. Residues 223–236 form a basic motif region; sequence KRQRPHYAIEKRYR. The 81-residue stretch at 223 to 303 folds into the bHLH domain; sequence KRQRPHYAIE…NQATLCIRQL (81 aa). Positions 237–303 are helix-loop-helix motif; sequence AGLQERFEAL…NQATLCIRQL (67 aa).

It localises to the nucleus. Transcription factor that specifically regulates the expression of the gene cluster that mediates the biosynthesis of gramillins A and B, bicyclic lipopeptides that induce cell death in maize leaves but not in wheat leaves. This chain is Transcription factor GRA2 (GRA2), found in Gibberella zeae (strain ATCC MYA-4620 / CBS 123657 / FGSC 9075 / NRRL 31084 / PH-1) (Wheat head blight fungus).